Reading from the N-terminus, the 666-residue chain is Non-receptor tyrosine-protein kinase TNK1 (666 aa).

Ser96 bears the Phosphoserine mark. Positions Val116–Leu383 constitute a Protein kinase domain. ATP contacts are provided by residues Leu122–Val130 and Lys148. The Proton acceptor role is filled by Asp245. At Ser255 the chain carries Phosphoserine. The 61-residue stretch at Ala381–Leu441 folds into the SH3 domain. The tract at residues Gly442 to Pro589 is disordered. The segment covering His457–Thr473 has biased composition (basic and acidic residues). Ser498 is modified (phosphoserine). Position 510 is a phosphothreonine (Thr510). Ser515 carries the post-translational modification Phosphoserine. The span at Asp531–Pro544 shows a compositional bias: pro residues. Position 582 is a phosphoserine (Ser582).

Belongs to the protein kinase superfamily. Tyr protein kinase family. In terms of assembly, interacts with the SH3 domain of PLCG1 via its Pro-rich domain. Post-translationally, autophosphorylated on tyrosine residues. As to expression, expressed in whole embryo and all adult tissues examined including liver, kidney, heart, brain, skeletal muscle and intestine. Also detected in various myeloid- and lymphoid-derived cell lines.

Its subcellular location is the membrane. The protein localises to the cytoplasm. The enzyme catalyses L-tyrosyl-[protein] + ATP = O-phospho-L-tyrosyl-[protein] + ADP + H(+). Its function is as follows. May function in signaling pathways utilized broadly during fetal development and more selectively in adult tissues and in cells of the lymphohematopoietic system. Could specifically be involved in phospholipid signal transduction. Involved in negative regulation of cell growth. Has tumor suppressor properties. Plays a negative regulatory role in the Ras-MAPK pathway. This Mus musculus (Mouse) protein is Non-receptor tyrosine-protein kinase TNK1.